Reading from the N-terminus, the 214-residue chain is uncharacterized protein (214 aa).

A run of 5 helical transmembrane segments spans residues 18–38 (LLLL…NTFV), 51–71 (DLAL…IVAG), 80–100 (ILVL…VLLV), 108–128 (LLVL…AFNV), and 145–165 (FFGV…GYII).

It is found in the cell membrane. This is an uncharacterized protein from Geobacillus stearothermophilus (Bacillus stearothermophilus).